The sequence spans 228 residues: Small ribosomal subunit protein uS3 (228 aa).

Residues 39-107 (VREYLQDKLK…PVHINIEEIR (69 aa)) form the KH type-2 domain.

It belongs to the universal ribosomal protein uS3 family. In terms of assembly, part of the 30S ribosomal subunit. Forms a tight complex with proteins S10 and S14.

Functionally, binds the lower part of the 30S subunit head. Binds mRNA in the 70S ribosome, positioning it for translation. This Pseudomonas fluorescens (strain ATCC BAA-477 / NRRL B-23932 / Pf-5) protein is Small ribosomal subunit protein uS3.